The following is a 339-amino-acid chain: Phenylalanine--tRNA ligase alpha subunit (339 aa).

Residue Glu254 participates in Mg(2+) binding.

Belongs to the class-II aminoacyl-tRNA synthetase family. Phe-tRNA synthetase alpha subunit type 1 subfamily. As to quaternary structure, tetramer of two alpha and two beta subunits. The cofactor is Mg(2+).

It is found in the cytoplasm. The enzyme catalyses tRNA(Phe) + L-phenylalanine + ATP = L-phenylalanyl-tRNA(Phe) + AMP + diphosphate + H(+). In Caldanaerobacter subterraneus subsp. tengcongensis (strain DSM 15242 / JCM 11007 / NBRC 100824 / MB4) (Thermoanaerobacter tengcongensis), this protein is Phenylalanine--tRNA ligase alpha subunit.